The primary structure comprises 68 residues: 1-carboxybiuret hydrolase subunit AtzG (68 aa).

As to quaternary structure, heterotetramer consisting of 2 AtzE and 2 AtzG subunits.

It participates in xenobiotic degradation; atrazine degradation. Important for the activity of the AtzE subunit of 1-carboxybiuret hydrolase. The protein is 1-carboxybiuret hydrolase subunit AtzG of Pseudomonas sp. (strain ADP).